A 55-amino-acid chain; its full sequence is Metallothionein-3 (55 aa).

The protein belongs to the metallothionein superfamily. Type 11 family.

The polypeptide is Metallothionein-3 (MTP3) (Yarrowia lipolytica (strain CLIB 122 / E 150) (Yeast)).